Consider the following 611-residue polypeptide: Leucine aminopeptidase 2 (611 aa).

A peptide contacts are provided by residues 135 to 137 (QCQ) and 265 to 270 (PYGGME). A Zn(2+)-binding site is contributed by H294. The active-site Proton acceptor is E295. Zn(2+) is bound by residues H298 and E317. The Proton donor role is filled by Y383.

The protein belongs to the peptidase M1 family. It depends on Zn(2+) as a cofactor.

The protein localises to the cytoplasm. The protein resides in the nucleus. It carries out the reaction an epoxide + H2O = an ethanediol. Functionally, aminopeptidase that preferentially cleaves di- and tripeptides. Also has low epoxide hydrolase activity (in vitro). Can hydrolyze the epoxide leukotriene LTA(4) but it forms preferentially 5,6-dihydroxy-7,9,11,14-eicosatetraenoic acid rather than the cytokine leukotriene B(4) as the product compared to the homologous mammalian enzyme (in vitro). This is Leucine aminopeptidase 2 from Chaetomium globosum (strain ATCC 6205 / CBS 148.51 / DSM 1962 / NBRC 6347 / NRRL 1970) (Soil fungus).